A 1213-amino-acid polypeptide reads, in one-letter code: SWI/SNF complex subunit SMARCC2 (1213 aa).

Residues 1–274 (MAVRKKDGGP…PVSRRKKISA (274 aa)) are marR-like, BRCT and chromo domains module. The region spanning 10-136 (PNVKYYEAAD…IEKSLVQNNC (127 aa)) is the MarR-like domain. Positions 140 to 183 (PNIFLCPEIEPKLLGKLKDIVKRHQGTISEDKSNASHVVYPVPG) constitute a BRCT; N-terminus domain. Residues 189 to 217 (EWVRPVMKRDKQVLLHWGYYPDSYDTWIP) enclose the Chromo domain. The BRCT; C-terminus domain maps to 233–257 (KPRKVHAKWILDTDTFNEWMNEEDY). Positions 256 to 413 (DYEVSDDKSP…GEQTKNPDLH (158 aa)) are disordered. The segment covering 275–284 (KTLTDEVNSP) has biased composition (polar residues). Residues serine 283, serine 286, serine 302, serine 304, and serine 306 each carry the phosphoserine modification. Lysine 312 carries the N6-(ADP-ribosyl)lysine modification. Lysine 326 is subject to N6-acetyllysine. Positions 331-344 (HREEEQEDLTKDMD) are enriched in basic and acidic residues. 2 positions are modified to phosphoserine: serine 347 and serine 387. Residues 379 to 398 (DLDEQDDESMETTGKDEDEN) show a composition bias toward acidic residues. Positions 424–521 (IIIPSYAAWF…YQVDAESRPT (98 aa)) constitute an SWIRM domain. Glycyl lysine isopeptide (Lys-Gly) (interchain with G-Cter in SUMO2) cross-links involve residues lysine 564, lysine 566, lysine 568, and lysine 592. One can recognise an SANT domain in the interval 596 to 647 (SATREWTEQETLLLLEALEMYKDDWNKVSEHVGSRTQDECILHFLRLPIEDP). Lysine 704 participates in a covalent cross-link: Glycyl lysine isopeptide (Lys-Gly) (interchain with G-Cter in SUMO2). The disordered stretch occupies residues 724-848 (KVTGKADPAF…AEPEGERKTK (125 aa)). Positions 747 to 777 (EPERIEESGTEEARPEGQAADEKKEPKEPRE) are enriched in basic and acidic residues. A Glycyl lysine isopeptide (Lys-Gly) (interchain with G-Cter in SUMO2) cross-link involves residue lysine 787. The segment covering 788 to 848 (EEISEVPKKD…AEPEGERKTK (61 aa)) has biased composition (basic and acidic residues). Serine 813 carries the post-translational modification Phosphoserine. Lysine 848 participates in a covalent cross-link: Glycyl lysine isopeptide (Lys-Gly) (interchain with G-Cter in SUMO2). The stretch at 907–934 (EELETIMDREREALEYQRQQLLADRQAF) forms a coiled coil. Disordered regions lie at residues 947-1073 (RQQH…HPGV) and 1181-1213 (LPSASPLPDPGTPLPPDPTAPSPGTVTPVPPPQ). A compositionally biased stretch (low complexity) spans 949 to 962 (QHFQQMHQQQQQQP). Positions 963 to 974 (PTLPPGSQPIPP) are enriched in pro residues. A compositionally biased stretch (low complexity) spans 975 to 1033 (TGAAGPPTVHGLAVPPAAVASAPPGSGAPPGSLGPSEQIGQAGTTAGPQQPQQAGAPQP). Composition is skewed to pro residues over residues 1034–1060 (GAVPPGVPPPGPHGPSPFPNQPTPPSM) and 1185–1201 (SPLPDPGTPLPPDPTAP).

Belongs to the SMARCC family. In terms of assembly, component of the multiprotein chromatin-remodeling complexes SWI/SNF: SWI/SNF-A (BAF), SWI/SNF-B (PBAF) and related complexes. The canonical complex contains a catalytic subunit (either SMARCA4/BRG1/BAF190A or SMARCA2/BRM/BAF190B) and at least SMARCE1, ACTL6A/BAF53, SMARCC1/BAF155, SMARCC2/BAF170, and SMARCB1/SNF5/BAF47. Other subunits specific to each of the complexes may also be present permitting several possible combinations developmentally and tissue specific. Component of the BAF complex, which includes at least actin (ACTB), ARID1A/BAF250A, ARID1B/BAF250B, SMARCA2/BRM, SMARCA4/BRG1, ACTL6A/BAF53, ACTL6B/BAF53B, SMARCE1/BAF57, SMARCC1/BAF155, SMARCC2/BAF170, SMARCB1/SNF5/INI1, and one or more SMARCD1/BAF60A, SMARCD2/BAF60B, or SMARCD3/BAF60C. In muscle cells, the BAF complex also contains DPF3. Component of neural progenitors-specific chromatin remodeling complex (npBAF complex) composed of at least, ARID1A/BAF250A or ARID1B/BAF250B, SMARCD1/BAF60A, SMARCD3/BAF60C, SMARCA2/BRM/BAF190B, SMARCA4/BRG1/BAF190A, SMARCB1/BAF47, SMARCC1/BAF155, SMARCE1/BAF57, SMARCC2/BAF170, PHF10/BAF45A, ACTL6A/BAF53A and actin. Component of neuron-specific chromatin remodeling complex (nBAF complex) composed of at least, ARID1A/BAF250A or ARID1B/BAF250B, SMARCD1/BAF60A, SMARCD3/BAF60C, SMARCA2/BRM/BAF190B, SMARCA4/BRG1/BAF190A, SMARCB1/BAF47, SMARCC1/BAF155, SMARCE1/BAF57, SMARCC2/BAF170, DPF1/BAF45B, DPF3/BAF45C, ACTL6B/BAF53B and actin. Component of the SWI/SNF-B (PBAF) chromatin remodeling complex, at least composed of SMARCA4/BRG1, SMARCB1/BAF47/SNF5, ACTL6A/BAF53A or ACTL6B/BAF53B, SMARCE1/BAF57, SMARCD1/BAF60A, SMARCD2/BAF60B, perhaps SMARCD3/BAF60C, SMARCC1/BAF155, SMARCC2/BAF170, PBRM1/BAF180, ARID2/BAF200 and actin. May also interact with the SIN3A histone deacetylase transcription repressor complex in conjunction with SMARCA2 and SMARCA4. Interacts with SMARD1. Interacts with KDM6B. Interaction with RCOR1. Interacts with DPF2. Interacts with ERCC6. Interacts with FOS. Mono-ADP-ribosylation at Lys-312 by SIRT6 promotes recruitment to the enhancer region of the Heme oxygenase-1 (HO-1) locus, leading to transcription activation of the locus.

It is found in the nucleus. In terms of biological role, involved in transcriptional activation and repression of select genes by chromatin remodeling (alteration of DNA-nucleosome topology). Component of SWI/SNF chromatin remodeling complexes that carry out key enzymatic activities, changing chromatin structure by altering DNA-histone contacts within a nucleosome in an ATP-dependent manner. Can stimulate the ATPase activity of the catalytic subunit of these complexes. May be required for CoREST dependent repression of neuronal specific gene promoters in non-neuronal cells. Belongs to the neural progenitors-specific chromatin remodeling complex (npBAF complex) and the neuron-specific chromatin remodeling complex (nBAF complex). During neural development a switch from a stem/progenitor to a postmitotic chromatin remodeling mechanism occurs as neurons exit the cell cycle and become committed to their adult state. The transition from proliferating neural stem/progenitor cells to postmitotic neurons requires a switch in subunit composition of the npBAF and nBAF complexes. As neural progenitors exit mitosis and differentiate into neurons, npBAF complexes which contain ACTL6A/BAF53A and PHF10/BAF45A, are exchanged for homologous alternative ACTL6B/BAF53B and DPF1/BAF45B or DPF3/BAF45C subunits in neuron-specific complexes (nBAF). The npBAF complex is essential for the self-renewal/proliferative capacity of the multipotent neural stem cells. The nBAF complex along with CREST plays a role regulating the activity of genes essential for dendrite growth. Critical regulator of myeloid differentiation, controlling granulocytopoiesis and the expression of genes involved in neutrophil granule formation. This is SWI/SNF complex subunit SMARCC2 (Smarcc2) from Mus musculus (Mouse).